A 151-amino-acid polypeptide reads, in one-letter code: UPF0178 protein YaiI (151 aa).

This sequence belongs to the UPF0178 family.

This Salmonella paratyphi B (strain ATCC BAA-1250 / SPB7) protein is UPF0178 protein YaiI.